The sequence spans 346 residues: S-adenosylmethionine:tRNA ribosyltransferase-isomerase (346 aa).

The protein belongs to the QueA family. Monomer.

The protein resides in the cytoplasm. It carries out the reaction 7-aminomethyl-7-carbaguanosine(34) in tRNA + S-adenosyl-L-methionine = epoxyqueuosine(34) in tRNA + adenine + L-methionine + 2 H(+). Its pathway is tRNA modification; tRNA-queuosine biosynthesis. Transfers and isomerizes the ribose moiety from AdoMet to the 7-aminomethyl group of 7-deazaguanine (preQ1-tRNA) to give epoxyqueuosine (oQ-tRNA). The polypeptide is S-adenosylmethionine:tRNA ribosyltransferase-isomerase (Lactococcus lactis subsp. cremoris (strain MG1363)).